The following is a 551-amino-acid chain: Cytochrome P450 monooxygenase FCK2 (551 aa).

The next 3 membrane-spanning stretches (helical) occupy residues 8–28 (FDPA…VFIF), 35–55 (LHVF…VYIV), and 69–89 (VTTI…ISIL). Asn258 carries an N-linked (GlcNAc...) asparagine glycan. Cys493 lines the heme pocket.

Belongs to the cytochrome P450 family. The cofactor is heme.

The protein resides in the membrane. It participates in secondary metabolite biosynthesis. Functionally, cytochrome P450 monooxygenase; part of the gene cluster that mediates the biosynthesis of cytokinins such as fusatin, fusatinic acids or 8-oxofusatin, known for their growth promoting and anti-senescence activities toward host plants. FCK1 is a bifunctional enzyme that performs the first steps in the biosynthesis of Fusarium cytokinins. It first condenses adenosine monophosphate (AMP) with dimethylallyl diphosphate (DMAPP) to yield isoprenyl adenosine monophosphate. It then catalyzes the removal of the phosphoribose to produce isopentenylaldehyde. The cytochrome P450 monooxygenase then converts isopentenylaldehyde to trans-zeatin. A condensation step converts trans-zeatin to fusatin which is further modified to produce fusatinic acid. The mechanism for oxidation of fusatin to fusatinic acid remains unknown. 8-oxofusatin could be produced through several pathways, via direct oxygenation of fusatin, or via the 8-oxo-pentenyladenine intermediate which itself must arise from either the prenylation of 8-oxo-AMP by FCK1 and/or oxygenation of isopentenylaldehyde. Both the FCK3 and FCK4 enzymes act downstream of the identified cytokinins to produce yet unidentified compounds. This chain is Cytochrome P450 monooxygenase FCK2, found in Fusarium pseudograminearum (strain CS3096) (Wheat and barley crown-rot fungus).